We begin with the raw amino-acid sequence, 253 residues long: FGFR1 oncogene partner 2 homolog (253 aa).

Positions 5–104 (IEKALADAKA…SALELIMSKY (100 aa)) form a coiled coil. Phosphoserine is present on serine 140. Positions 160 to 223 (LERRHLEANQ…LREILQITRE (64 aa)) form a coiled coil. The tract at residues 231 to 253 (DDASESTSLSALVTNSDLSLRKS) is disordered. Polar residues predominate over residues 235–253 (ESTSLSALVTNSDLSLRKS).

This sequence belongs to the SIKE family.

Its subcellular location is the cytoplasm. Functionally, may be involved in wound healing pathway. The protein is FGFR1 oncogene partner 2 homolog (Fgfr1op2) of Mus musculus (Mouse).